Here is a 321-residue protein sequence, read N- to C-terminus: Type 3 secretion system translocon protein SctB (321 aa).

A helical transmembrane segment spans residues Ala99–Ile119.

This sequence belongs to the SctB/EspB family. The core secretion machinery of the T3SS is composed of approximately 20 different proteins, including cytoplasmic components, a base, an export apparatus and a needle. This subunit is involved in the formation of a pore, called the translocon, in host membrane.

Its subcellular location is the secreted. The protein localises to the cell surface. It localises to the host membrane. Its function is as follows. Component of the type III secretion system (T3SS), also called injectisome, which is used to inject bacterial effector proteins into eukaryotic host cells. EspD and EspB are inserted into the host membrane where they form a pore and allow the translocation of effector proteins into the cytosol of target cells. Necessary for intimate attachment to epithelial cells. This Escherichia coli O127:H6 (strain E2348/69 / EPEC) protein is Type 3 secretion system translocon protein SctB.